The sequence spans 843 residues: Protein P (843 aa).

A terminal protein domain (TP) region spans residues methionine 1–glutamine 177. Positions glutamate 178–leucine 346 are spacer. Disordered stretches follow at residues leucine 218–isoleucine 243 and serine 290–serine 316. Polar residues predominate over residues serine 290–glycine 299. A polymerase/reverse transcriptase domain (RT) region spans residues glutamate 347–glutamine 690. Residues glutamate 357–isoleucine 600 form the Reverse transcriptase domain. 3 residues coordinate Mg(2+): aspartate 429, aspartate 551, and aspartate 552.

This sequence belongs to the hepadnaviridae P protein family.

It carries out the reaction DNA(n) + a 2'-deoxyribonucleoside 5'-triphosphate = DNA(n+1) + diphosphate. It catalyses the reaction Endonucleolytic cleavage to 5'-phosphomonoester.. Its activity is regulated as follows. Activated by host HSP70 and HSP40 in vitro to be able to bind the epsilon loop of the pgRNA. Because deletion of the RNase H region renders the protein partly chaperone-independent, the chaperones may be needed indirectly to relieve occlusion of the RNA-binding site by this domain. Inhibited by several reverse-transcriptase inhibitors: Lamivudine, Adefovir and Entecavir. Multifunctional enzyme that converts the viral RNA genome into dsDNA in viral cytoplasmic capsids. This enzyme displays a DNA polymerase activity that can copy either DNA or RNA templates, and a ribonuclease H (RNase H) activity that cleaves the RNA strand of RNA-DNA heteroduplexes in a partially processive 3'- to 5'-endonucleasic mode. Neo-synthesized pregenomic RNA (pgRNA) are encapsidated together with the P protein, and reverse-transcribed inside the nucleocapsid. Initiation of reverse-transcription occurs first by binding the epsilon loop on the pgRNA genome, and is initiated by protein priming, thereby the 5'-end of (-)DNA is covalently linked to P protein. Partial (+)DNA is synthesized from the (-)DNA template and generates the relaxed circular DNA (RC-DNA) genome. After budding and infection, the RC-DNA migrates in the nucleus, and is converted into a plasmid-like covalently closed circular DNA (cccDNA). The activity of P protein does not seem to be necessary for cccDNA generation, and is presumably released from (+)DNA by host nuclear DNA repair machinery. The chain is Protein P from Homo sapiens (Human).